Here is a 1771-residue protein sequence, read N- to C-terminus: Kinase D-interacting substrate of 220 kDa (1771 aa).

The Cytoplasmic segment spans residues methionine 1–tryptophan 499. 12 ANK repeats span residues leucine 4 to glutamate 33, cysteine 37 to leucine 66, aspartate 70 to histidine 99, glycine 103 to valine 132, tyrosine 136 to cysteine 165, tyrosine 169 to glutamine 198, asparagine 202 to leucine 231, aspartate 235 to isoleucine 264, serine 268 to isoleucine 297, aspartate 301 to isoleucine 330, aspartate 334 to alanine 363, and lysine 367 to leucine 396. Residues tyrosine 440–leucine 953 enclose the KAP NTPase domain. A helical membrane pass occupies residues leucine 500–valine 520. Residues histidine 521–leucine 524 lie on the Extracellular side of the membrane. A helical membrane pass occupies residues glycine 525–phenylalanine 545. Over glycine 546–serine 659 the chain is Cytoplasmic. A helical membrane pass occupies residues phenylalanine 660 to phenylalanine 680. The Extracellular portion of the chain corresponds to arginine 681–lysine 685. The helical transmembrane segment at histidine 686 to leucine 706 threads the bilayer. Topologically, residues asparagine 707–leucine 1771 are cytoplasmic. Phosphoserine occurs at positions 882 and 885. Residue threonine 914 is modified to Phosphothreonine. Serine 918 bears the Phosphoserine mark. Residues proline 1089–proline 1092 are mediates interaction with CRKL. A Phosphoserine modification is found at serine 1163. Disordered regions lie at residues aspartate 1182–glycine 1202, proline 1285–histidine 1310, arginine 1344–serine 1368, and leucine 1397–arginine 1564. Residues serine 1296, serine 1352, serine 1359, serine 1361, serine 1362, and serine 1365 each carry the phosphoserine modification. The segment covering serine 1346–proline 1358 has biased composition (polar residues). Residues serine 1359 to serine 1368 are compositionally biased toward low complexity. Over residues serine 1403–asparagine 1430 the composition is skewed to polar residues. Residues leucine 1431 to valine 1457 show a composition bias toward basic and acidic residues. A compositionally biased stretch (polar residues) spans tyrosine 1460 to alanine 1470. Phosphoserine is present on residues serine 1521, serine 1526, serine 1555, and serine 1574. Positions aspartate 1522–aspartate 1532 are enriched in acidic residues. Positions leucine 1537 to glutamate 1561 are enriched in basic and acidic residues. The disordered stretch occupies residues leucine 1578–serine 1633. Low complexity predominate over residues aspartate 1585–serine 1594. Serine 1623 and serine 1633 each carry phosphoserine. Residue threonine 1679 is modified to Phosphothreonine. Residue serine 1681 is modified to Phosphoserine. Threonine 1684 is modified (phosphothreonine). Residues leucine 1713 to serine 1731 are compositionally biased toward polar residues. Residues leucine 1713 to leucine 1771 form a disordered region. A PDZ-binding motif is present at residues glutamate 1766–leucine 1771.

In terms of assembly, found in a complex, at least composed of KIDINS220, MAGI2, NTRK1 and RAPGEF2; the complex is mainly formed at late endosomes in a nerve growth factor (NGF)-dependent manner. Interacts with RAPGEF2; the interaction is strengthened after NGF stimulation. Isoform 2 interacts (via C-terminal domain) with MAGI2 isoform 1 (via PDZ domain). Interacts with NTRK1, NTRK2, NTRK3, ERKL and NGFR. Can form a ternary complex with NGFR and NTRK1 and this complex is affected by the expression levels of KIDINS220/ARMS. An increase in KIDINS220/ARMS expression leads to a decreased association of NGFR and NTRK1. Interacts (via PDZ-binding motif) with SNTA1 and SNTB2 (via PDZ domains). Interacts with EPHA4 and PRKD1. Post-translationally, tyrosine phosphorylated by NTRK1, NTRK2, EPHB2 and EPHA4. Phosphorylation at Ser-918 is induced by phorbol ester treatment. Phosphorylation by NTRK2 is induced by brain-derived neurotrophic factor (BDNF) and neurotrophin-4/5. Phosphorylation by NTRK1 is induced by nerve growth factor (NGF). As to expression, abundant in developing and adult neural tissues as well as neuroendocrine cells and dendritic cells. Overexpressed in melanoma and melanoma cell lines.

Its subcellular location is the membrane. The protein localises to the late endosome. Functionally, promotes a prolonged MAP-kinase signaling by neurotrophins through activation of a Rap1-dependent mechanism. Provides a docking site for the CRKL-C3G complex, resulting in Rap1-dependent sustained ERK activation. May play an important role in regulating postsynaptic signal transduction through the syntrophin-mediated localization of receptor tyrosine kinases such as EPHA4. In cooperation with SNTA1 can enhance EPHA4-induced JAK/STAT activation. Plays a role in nerve growth factor (NGF)-induced recruitment of RAPGEF2 to late endosomes and neurite outgrowth. May play a role in neurotrophin- and ephrin-mediated neuronal outgrowth and in axon guidance during neural development and in neuronal regeneration. Modulates stress-induced apoptosis of melanoma cells via regulation of the MEK/ERK signaling pathway. The sequence is that of Kinase D-interacting substrate of 220 kDa (KIDINS220) from Homo sapiens (Human).